Reading from the N-terminus, the 97-residue chain is MTDANDTPATPPRESLIEYPSDFPIKVMGKMQDDFAETIVQLVQQFDPEFHTGRMEMRPSSGGNYLGLTVIVRATSREQLDALYRALTAHPMVKVVL.

Belongs to the UPF0250 family.

This Ralstonia nicotianae (strain ATCC BAA-1114 / GMI1000) (Ralstonia solanacearum) protein is UPF0250 protein RSc0326.